Here is an 89-residue protein sequence, read N- to C-terminus: Small ribosomal subunit protein uS15 (89 aa).

This sequence belongs to the universal ribosomal protein uS15 family. Part of the 30S ribosomal subunit. Forms a bridge to the 50S subunit in the 70S ribosome, contacting the 23S rRNA.

Its function is as follows. One of the primary rRNA binding proteins, it binds directly to 16S rRNA where it helps nucleate assembly of the platform of the 30S subunit by binding and bridging several RNA helices of the 16S rRNA. Functionally, forms an intersubunit bridge (bridge B4) with the 23S rRNA of the 50S subunit in the ribosome. This is Small ribosomal subunit protein uS15 from Mycobacterium bovis (strain ATCC BAA-935 / AF2122/97).